A 637-amino-acid chain; its full sequence is MANKLKVDELRLKLAERGLSTTGVKAVLVERLEEAIAEDTKKEESKSKRKRNSSNDTYESNKLIAIGEFRGMIVKELREEAIKRGLDTTGTKKDLLERLCNDANNVSNAPVKSSNGTDEAEDDNNGFEEEKKEEKIVTATKKGAAVLDQWIPDEIKSQYHVLQRGDDVYDAILNQTNVRDNNNKFFVLQVLESDSKKTYMVYTRWGRVGVKGQSKLDGPYDSWDRAIEIFTNKFNDKTKNYWSDRKEFIPHPKSYTWLEMDYGKEENDSPVNNDIPSSSSEVKPEQSKLDTRVAKFISLICNVSMMAQHMMEIGYNANKLPLGKISKSTISKGYEVLKRISEVIDRYDRTRLEELSGEFYTVIPHDFGFKKMSQFVIDTPQKLKQKIEMVEALGEIELATKLLSVDPGLQDDPLYYHYQQLNCGLTPVGNDSEEFSMVANYMENTHAKTHSGYTVEIAQLFRASRAVEADRFQQFSSSKNRMLLWHGSRLTNWAGILSQGLRIAPPEAPVTGYMFGKGVYFADMFSKSANYCYANTGANDGVLLLCEVALGDMNELLYSDYNADNLPPGKLSTKGVGKTAPNPSEAQTLEDGVVVPLGKPVERSCSKGMLLYNEYIVYNVEQIKMRYVIQVKFNYKH.

The DNA-binding element occupies 1–140 (MANKLKVDEL…KKEEKIVTAT (140 aa)). Residues 2 to 36 (ANKLKVDELRLKLAERGLSTTGVKAVLVERLEEAI) form the SAP 1 domain. Basic and acidic residues predominate over residues 35–46 (AIAEDTKKEESK). Residues 35-56 (AIAEDTKKEESKSKRKRNSSND) form a disordered region. The Nuclear localization signal signature appears at 41–62 (KKEESKSKRKRNSSNDTYESNK). The 35-residue stretch at 69–103 (FRGMIVKELREEAIKRGLDTTGTKKDLLERLCNDA) folds into the SAP 2 domain. Residues 106 to 117 (VSNAPVKSSNGT) show a composition bias toward polar residues. Residues 106–134 (VSNAPVKSSNGTDEAEDDNNGFEEEKKEE) form a disordered region. Positions 118–127 (DEAEDDNNGF) are enriched in acidic residues. Residues 158–255 (QYHVLQRGDD…KEFIPHPKSY (98 aa)) enclose the WGR domain. One can recognise a PARP alpha-helical domain in the interval 286 to 404 (QSKLDTRVAK…EIELATKLLS (119 aa)). The PARP catalytic domain maps to 412-637 (DPLYYHYQQL…VIQVKFNYKH (226 aa)).

It belongs to the ARTD/PARP family.

It is found in the nucleus. The catalysed reaction is NAD(+) + (ADP-D-ribosyl)n-acceptor = nicotinamide + (ADP-D-ribosyl)n+1-acceptor + H(+).. It catalyses the reaction L-aspartyl-[protein] + NAD(+) = 4-O-(ADP-D-ribosyl)-L-aspartyl-[protein] + nicotinamide. The enzyme catalyses L-glutamyl-[protein] + NAD(+) = 5-O-(ADP-D-ribosyl)-L-glutamyl-[protein] + nicotinamide. Its function is as follows. Involved in the base excision repair (BER) pathway, by catalyzing the poly(ADP-ribosyl)ation of a limited number of acceptor proteins involved in chromatin architecture and in DNA metabolism. This modification follows DNA damages and appears as an obligatory step in a detection/signaling pathway leading to the reparation of DNA strand breaks. This chain is Poly [ADP-ribose] polymerase 2 (PARP2), found in Arabidopsis thaliana (Mouse-ear cress).